A 341-amino-acid chain; its full sequence is Tetraacyldisaccharide 4'-kinase (341 aa).

T54 to T61 is a binding site for ATP.

It belongs to the LpxK family.

It carries out the reaction a lipid A disaccharide + ATP = a lipid IVA + ADP + H(+). Its pathway is glycolipid biosynthesis; lipid IV(A) biosynthesis; lipid IV(A) from (3R)-3-hydroxytetradecanoyl-[acyl-carrier-protein] and UDP-N-acetyl-alpha-D-glucosamine: step 6/6. Its function is as follows. Transfers the gamma-phosphate of ATP to the 4'-position of a tetraacyldisaccharide 1-phosphate intermediate (termed DS-1-P) to form tetraacyldisaccharide 1,4'-bis-phosphate (lipid IVA). The polypeptide is Tetraacyldisaccharide 4'-kinase (Brucella suis (strain ATCC 23445 / NCTC 10510)).